We begin with the raw amino-acid sequence, 285 residues long: ATP synthase gamma chain (285 aa).

Belongs to the ATPase gamma chain family. In terms of assembly, F-type ATPases have 2 components, CF(1) - the catalytic core - and CF(0) - the membrane proton channel. CF(1) has five subunits: alpha(3), beta(3), gamma(1), delta(1), epsilon(1). CF(0) has three main subunits: a, b and c.

The protein resides in the cell membrane. Produces ATP from ADP in the presence of a proton gradient across the membrane. The gamma chain is believed to be important in regulating ATPase activity and the flow of protons through the CF(0) complex. The sequence is that of ATP synthase gamma chain from Dehalococcoides mccartyi (strain ATCC BAA-2266 / KCTC 15142 / 195) (Dehalococcoides ethenogenes (strain 195)).